A 72-amino-acid polypeptide reads, in one-letter code: MSKEDSFEMEGTVADTLPNTMFRVELENGHVVTAHISGKMRKNYIRILTGDKVRVELTPYDLSKGRITYRAR.

In terms of domain architecture, S1-like spans 1-72 (MSKEDSFEME…SKGRITYRAR (72 aa)).

Belongs to the IF-1 family. As to quaternary structure, component of the 30S ribosomal translation pre-initiation complex which assembles on the 30S ribosome in the order IF-2 and IF-3, IF-1 and N-formylmethionyl-tRNA(fMet); mRNA recruitment can occur at any time during PIC assembly.

The protein localises to the cytoplasm. In terms of biological role, one of the essential components for the initiation of protein synthesis. Stabilizes the binding of IF-2 and IF-3 on the 30S subunit to which N-formylmethionyl-tRNA(fMet) subsequently binds. Helps modulate mRNA selection, yielding the 30S pre-initiation complex (PIC). Upon addition of the 50S ribosomal subunit IF-1, IF-2 and IF-3 are released leaving the mature 70S translation initiation complex. In Pseudomonas syringae pv. tomato (strain ATCC BAA-871 / DC3000), this protein is Translation initiation factor IF-1.